We begin with the raw amino-acid sequence, 288 residues long: 33 kDa chaperonin (288 aa).

Intrachain disulfides connect Cys-233-Cys-235 and Cys-267-Cys-270.

It belongs to the HSP33 family. Under oxidizing conditions two disulfide bonds are formed involving the reactive cysteines. Under reducing conditions zinc is bound to the reactive cysteines and the protein is inactive.

The protein localises to the cytoplasm. Redox regulated molecular chaperone. Protects both thermally unfolding and oxidatively damaged proteins from irreversible aggregation. Plays an important role in the bacterial defense system toward oxidative stress. The chain is 33 kDa chaperonin from Pasteurella multocida (strain Pm70).